Consider the following 76-residue polypeptide: Acyl carrier protein (76 aa).

Positions 1 to 76 (MSVEEKISKI…DAIAYIKNKQ (76 aa)) constitute a Carrier domain. Residue S36 is modified to O-(pantetheine 4'-phosphoryl)serine.

This sequence belongs to the acyl carrier protein (ACP) family. Post-translationally, 4'-phosphopantetheine is transferred from CoA to a specific serine of apo-ACP by AcpS. This modification is essential for activity because fatty acids are bound in thioester linkage to the sulfhydryl of the prosthetic group.

The protein localises to the cytoplasm. It functions in the pathway lipid metabolism; fatty acid biosynthesis. In terms of biological role, carrier of the growing fatty acid chain in fatty acid biosynthesis. This chain is Acyl carrier protein, found in Nitratidesulfovibrio vulgaris (strain DSM 19637 / Miyazaki F) (Desulfovibrio vulgaris).